A 110-amino-acid chain; its full sequence is Guanine nucleotide-binding protein subunit gamma (110 aa).

Cys-106 carries S-palmitoyl cysteine lipidation. Cysteine methyl ester is present on Cys-107. A lipid anchor (S-farnesyl cysteine) is attached at Cys-107. The propeptide at 108-110 is removed in mature form; it reads TLM.

This sequence belongs to the G protein gamma family. In terms of assembly, g proteins are composed of 3 units, alpha, beta and gamma. The beta-gamma subunit complex (STE4-STE18 complex) interacts with PLP1 and PLP2.

It localises to the membrane. In terms of biological role, implicated in the pheromone A- and alpha-factor response pathway. The beta and gamma chains of the putative yeast mating response pathway G protein play a positive role in initiation of the mating response. This chain is Guanine nucleotide-binding protein subunit gamma (STE18), found in Saccharomyces cerevisiae (strain ATCC 204508 / S288c) (Baker's yeast).